The sequence spans 343 residues: uncharacterized protein (343 aa).

Residue 33 to 40 (GPKSSGKS) participates in ATP binding.

It belongs to the archaeal ATPase family.

This is an uncharacterized protein from Methanocaldococcus jannaschii (strain ATCC 43067 / DSM 2661 / JAL-1 / JCM 10045 / NBRC 100440) (Methanococcus jannaschii).